The following is a 269-amino-acid chain: 4-hydroxy-tetrahydrodipicolinate reductase (269 aa).

NAD(+) contacts are provided by residues 13–18 and Asp-39; that span reads GASGRM. Arg-40 contributes to the NADP(+) binding site. NAD(+)-binding positions include 101–103 and 125–128; these read GTT and APNM. Catalysis depends on His-158, which acts as the Proton donor/acceptor. His-159 is a binding site for (S)-2,3,4,5-tetrahydrodipicolinate. Lys-162 (proton donor) is an active-site residue. 168–169 contacts (S)-2,3,4,5-tetrahydrodipicolinate; it reads GT.

It belongs to the DapB family.

The protein localises to the cytoplasm. The catalysed reaction is (S)-2,3,4,5-tetrahydrodipicolinate + NAD(+) + H2O = (2S,4S)-4-hydroxy-2,3,4,5-tetrahydrodipicolinate + NADH + H(+). The enzyme catalyses (S)-2,3,4,5-tetrahydrodipicolinate + NADP(+) + H2O = (2S,4S)-4-hydroxy-2,3,4,5-tetrahydrodipicolinate + NADPH + H(+). It functions in the pathway amino-acid biosynthesis; L-lysine biosynthesis via DAP pathway; (S)-tetrahydrodipicolinate from L-aspartate: step 4/4. Functionally, catalyzes the conversion of 4-hydroxy-tetrahydrodipicolinate (HTPA) to tetrahydrodipicolinate. This Bordetella pertussis (strain Tohama I / ATCC BAA-589 / NCTC 13251) protein is 4-hydroxy-tetrahydrodipicolinate reductase.